The sequence spans 318 residues: Deoxyhypusine hydroxylase (318 aa).

HEAT-like PBS-type repeat units follow at residues 70–96 and 103–129; these read LKHE…VLEN and VRHE…YFKE. Fe cation is bound by residues His72, Glu73, His105, Glu106, His231, Glu232, His264, and Glu265. Residues 262–288 form an HEAT-like PBS-type 3 repeat; that stretch reads VRHEAAEALGSIATDECLPVLQSFLND.

Belongs to the deoxyhypusine hydroxylase family. Fe(2+) is required as a cofactor.

The protein localises to the cytoplasm. It is found in the nucleus. It catalyses the reaction [eIF5A protein]-deoxyhypusine + AH2 + O2 = [eIF5A protein]-hypusine + A + H2O. The protein operates within protein modification; eIF5A hypusination. Catalyzes the hydroxylation of the N(6)-(4-aminobutyl)-L-lysine intermediate to form hypusine, an essential post-translational modification only found in mature eIF-5A factor. The sequence is that of Deoxyhypusine hydroxylase from Candida albicans (strain SC5314 / ATCC MYA-2876) (Yeast).